Reading from the N-terminus, the 533-residue chain is Multicopy suppressor of sporulation protein msa1 (533 aa).

The disordered stretch occupies residues 30-68; it reads DIPPGSLSENDNSTTFIKPPLETASSSTPIPSSSSSGVL. The segment covering 36–45 has biased composition (polar residues); the sequence is LSENDNSTTF. Over residues 54–68 the composition is skewed to low complexity; that stretch reads SSSTPIPSSSSSGVL. The RRM 1 domain maps to 79-158; that stretch reads ACLFVASLNS…RHIRIERAKV (80 aa). Residues 237–292 form a disordered region; it reads YKKKGSSPFSPPNAHSRRRKSQGKDQSNTPVIKAPAPIPFSVSSDPPSTMGRSNSA. Over residues 277–292 the composition is skewed to polar residues; the sequence is SVSSDPPSTMGRSNSA. The 77-residue stretch at 365 to 441 folds into the RRM 2 domain; that stretch reads YSIFVGQLDP…KPLRVEFRQL (77 aa).

The protein resides in the cytoplasm. In terms of biological role, negative regulator of sexual differentiation. Acts by repressing the transcription of meiosis-inducing, ste11-regulated genes. This chain is Multicopy suppressor of sporulation protein msa1 (msa1), found in Schizosaccharomyces pombe (strain 972 / ATCC 24843) (Fission yeast).